The primary structure comprises 176 residues: Large ribosomal subunit protein uL6 (176 aa).

Belongs to the universal ribosomal protein uL6 family. As to quaternary structure, part of the 50S ribosomal subunit.

This protein binds to the 23S rRNA, and is important in its secondary structure. It is located near the subunit interface in the base of the L7/L12 stalk, and near the tRNA binding site of the peptidyltransferase center. The protein is Large ribosomal subunit protein uL6 of Paraburkholderia phymatum (strain DSM 17167 / CIP 108236 / LMG 21445 / STM815) (Burkholderia phymatum).